The primary structure comprises 249 residues: 2,3-bisphosphoglycerate-dependent phosphoglycerate mutase (249 aa).

Residues 10 to 17, 23 to 24, R62, 89 to 92, K100, 116 to 117, and 185 to 186 each bind substrate; these read RHGESEWN, TG, ERHY, RR, and GN. The active-site Tele-phosphohistidine intermediate is H11. Catalysis depends on E89, which acts as the Proton donor/acceptor.

This sequence belongs to the phosphoglycerate mutase family. BPG-dependent PGAM subfamily. Homodimer.

The catalysed reaction is (2R)-2-phosphoglycerate = (2R)-3-phosphoglycerate. The protein operates within carbohydrate degradation; glycolysis; pyruvate from D-glyceraldehyde 3-phosphate: step 3/5. Functionally, catalyzes the interconversion of 2-phosphoglycerate and 3-phosphoglycerate. The protein is 2,3-bisphosphoglycerate-dependent phosphoglycerate mutase of Hamiltonella defensa subsp. Acyrthosiphon pisum (strain 5AT).